Reading from the N-terminus, the 195-residue chain is Nuclear transcription factor Y subunit C-10 (195 aa).

The interval 1 to 24 (MRRPKSSHVRMEPVAPRSHNTMPM) is disordered.

This sequence belongs to the NFYC/HAP5 subunit family. In terms of assembly, heterotrimeric transcription factor composed of three components, NF-YA, NF-YB and NF-YC. NF-YB and NF-YC must interact and dimerize for NF-YA association and DNA binding.

The protein localises to the nucleus. Functionally, stimulates the transcription of various genes by recognizing and binding to a CCAAT motif in promoters. The polypeptide is Nuclear transcription factor Y subunit C-10 (NFYC10) (Arabidopsis thaliana (Mouse-ear cress)).